The following is a 506-amino-acid chain: Maturase K (506 aa).

It belongs to the intron maturase 2 family. MatK subfamily.

The protein resides in the plastid. Its subcellular location is the chloroplast. Its function is as follows. Usually encoded in the trnK tRNA gene intron. Probably assists in splicing its own and other chloroplast group II introns. This chain is Maturase K, found in Mimosa pudica (Sensitive plant).